The following is a 477-amino-acid chain: Inner membrane protein YbhI (477 aa).

Over 1-5 the chain is Cytoplasmic; sequence MNKKS. A helical transmembrane segment spans residues 6-26; it reads LWKLILILAIPCIIGFMPAPA. Gly-27 is a topological domain (periplasmic). Residues 28-48 traverse the membrane as a helical segment; sequence LSELAWVLFGIYLAAIVGLVI. Residues 49 to 50 are Cytoplasmic-facing; sequence KP. The chain crosses the membrane as a helical span at residues 51–71; the sequence is FPEPVVLLIAVAASMVVVGNL. The Periplasmic segment spans residues 72-87; sequence SDGAFKTTAVLSGYSS. A helical membrane pass occupies residues 88-108; that stretch reads GTTWLVFSAFTLSAAFVTTGL. Topologically, residues 109 to 148 are cytoplasmic; sequence GKRIAYLLIGKIGNTTLGLGYVTVFLDLVLAPATPSNTAR. Residues 149–169 traverse the membrane as a helical segment; that stretch reads AGGIVLPIINSVAVALGSEPE. At 170–219 the chain is on the periplasmic side; sequence KSPRRVGHYLMMSIYMVTKTTSYMFFTAMAGNILALKMINDILHLQISWG. The helical transmembrane segment at 220-240 threads the bilayer; the sequence is GWALAAGLPGIIMLLVTPLVI. Topologically, residues 241–272 are cytoplasmic; sequence YTMYPPEIKKVDNKTIAKAGLAELGPMKIREK. The helical transmembrane segment at 273-293 threads the bilayer; it reads MLLGVFVLALLGWIFSKSLGV. Over 294-297 the chain is Periplasmic; it reads DEST. Residues 298–318 traverse the membrane as a helical segment; it reads VAIVVMATMLLLGIVTWEDVV. Over 319–356 the chain is Cytoplasmic; the sequence is KNKGGWNTLIWYGGIIGLSSLLSKVKFFEWLAEVFKNN. The helical transmembrane segment at 357-377 threads the bilayer; sequence LAFDGHGNVAFFVIIFLSIIV. Position 378 (Arg-378) is a topological domain, periplasmic. The chain crosses the membrane as a helical span at residues 379-399; the sequence is YFFASGSAYIVAMLPVFAMLA. Over 400–445 the chain is Cytoplasmic; the sequence is NVSGAPLMLTALALLFSNSYGGMVTHYGGAAGPVIFGVGYNDIKSW. A helical membrane pass occupies residues 446-466; it reads WLVGAVLTILTFLVHITLGVW. The Periplasmic portion of the chain corresponds to 467–477; the sequence is WWNMLIGWNML.

Belongs to the SLC13A/DASS transporter (TC 2.A.47) family. DIT1 subfamily.

Its subcellular location is the cell inner membrane. The protein is Inner membrane protein YbhI (ybhI) of Escherichia coli (strain K12).